We begin with the raw amino-acid sequence, 32 residues long: Alcohol dehydrogenase-related 31 kDa protein (32 aa).

An NAD(+)-binding site is contributed by 11 to 32 (YVADCGGIALETSXVLMTKNIA).

Belongs to the short-chain dehydrogenases/reductases (SDR) family.

This is Alcohol dehydrogenase-related 31 kDa protein (Adhr) from Drosophila yakuba (Fruit fly).